A 396-amino-acid polypeptide reads, in one-letter code: Elongation factor Tu 1 (396 aa).

Positions 10–206 constitute a tr-type G domain; the sequence is KPHINVGTIG…AMDAHIPQPE (197 aa). Positions 19-26 are G1; sequence GHVDHGKT. 19–26 is a binding site for GTP; it reads GHVDHGKT. T26 contributes to the Mg(2+) binding site. The tract at residues 60–64 is G2; sequence GITIA. The segment at 81 to 84 is G3; sequence DCPG. GTP is bound by residues 81 to 85 and 136 to 139; these read DCPGH and NKAD. A G4 region spans residues 136-139; it reads NKAD. The tract at residues 174 to 176 is G5; that stretch reads SAL.

The protein belongs to the TRAFAC class translation factor GTPase superfamily. Classic translation factor GTPase family. EF-Tu/EF-1A subfamily. Monomer.

The protein localises to the cytoplasm. The enzyme catalyses GTP + H2O = GDP + phosphate + H(+). GTP hydrolase that promotes the GTP-dependent binding of aminoacyl-tRNA to the A-site of ribosomes during protein biosynthesis. In Halorhodospira halophila (strain DSM 244 / SL1) (Ectothiorhodospira halophila (strain DSM 244 / SL1)), this protein is Elongation factor Tu 1.